Reading from the N-terminus, the 397-residue chain is Kappa-carrageenase (397 aa).

The N-terminal stretch at methionine 1–alanine 25 is a signal peptide. Residues alanine 26–asparagine 299 enclose the GH16 domain. A disulfide bridge connects residues cysteine 98 and cysteine 268. The Nucleophile role is filled by glutamate 163. Residue aspartate 165 is part of the active site. The active-site Proton donor is the glutamate 168. The 72-residue stretch at alanine 316–glycine 387 folds into the BIG2 domain.

Belongs to the glycosyl hydrolase 16 family.

It localises to the periplasm. It catalyses the reaction Endohydrolysis of (1-&gt;4)-beta-D-linkages between D-galactose 4-sulfate and 3,6-anhydro-D-galactose in kappa-carrageenans.. This is Kappa-carrageenase (cgkA) from Pseudoalteromonas carrageenovora (Alteromonas carrageenovora).